A 278-amino-acid polypeptide reads, in one-letter code: MFFGILKAIILGIVEGITEFLPISSTGHLIIVDQFVKISSNKAFTTTFEYVIQLGAIIAVVLLYWKRLWPFGGGKTEKQRFNIWATWVKVVVGVIPSVIIGFLLNDWMDKHLMNWLVVSIALIVYGIAFIFIENYQKNRRPRVRTINHLTLADVLKIGFFQVLSIVPGTSRSGATILGGISIGVSREAAAEFSFFLSIPTMLGVSVLKIGSYLHSHGMFSGEQIVILLVGMFVSFVVAYVVIKWLLRFIQTHDFKAFGWYRIILGVLVIALGAIGIID.

The next 7 helical transmembrane spans lie at 1 to 21 (MFFG…TEFL), 43 to 63 (AFTT…VVLL), 83 to 103 (IWAT…IGFL), 112 to 132 (LMNW…FIFI), 192 to 212 (FSFF…IGSY), 224 to 244 (IVIL…VIKW), and 257 to 277 (FGWY…IGII).

This sequence belongs to the UppP family.

It localises to the cell membrane. It catalyses the reaction di-trans,octa-cis-undecaprenyl diphosphate + H2O = di-trans,octa-cis-undecaprenyl phosphate + phosphate + H(+). In terms of biological role, catalyzes the dephosphorylation of undecaprenyl diphosphate (UPP). Confers resistance to bacitracin. The polypeptide is Undecaprenyl-diphosphatase 1 (Oenococcus oeni (strain ATCC BAA-331 / PSU-1)).